A 358-amino-acid polypeptide reads, in one-letter code: tRNA-specific 2-thiouridylase MnmA 2 (358 aa).

Residues 11-18 (GMSGGVDS) and M37 each bind ATP. The Nucleophile role is filled by C106. A disulfide bridge connects residues C106 and C202. G130 contributes to the ATP binding site. An interaction with tRNA region spans residues 152–154 (KDQ). C202 acts as the Cysteine persulfide intermediate in catalysis. Residues 308 to 309 (RY) form an interaction with tRNA region.

It belongs to the MnmA/TRMU family.

It localises to the cytoplasm. The enzyme catalyses S-sulfanyl-L-cysteinyl-[protein] + uridine(34) in tRNA + AH2 + ATP = 2-thiouridine(34) in tRNA + L-cysteinyl-[protein] + A + AMP + diphosphate + H(+). Functionally, catalyzes the 2-thiolation of uridine at the wobble position (U34) of tRNA, leading to the formation of s(2)U34. The chain is tRNA-specific 2-thiouridylase MnmA 2 from Clostridium tetani (strain Massachusetts / E88).